We begin with the raw amino-acid sequence, 255 residues long: U2 small nuclear ribonucleoprotein A' (255 aa).

4 LRR repeats span residues 20 to 41, 43 to 64, 65 to 86, and 89 to 110; these read RDRE…GATL, QFDA…PLLR, RLKT…LDQA, and CLTE…DPLA. Residues 123-161 enclose the LRRCT domain; sequence NPVTNKKHYRLYVIYKVPQVRVLDFQKVKLKERQEAEKM. Lysine 172 bears the N6-acetyllysine; alternate mark. Lysine 172 participates in a covalent cross-link: Glycyl lysine isopeptide (Lys-Gly) (interchain with G-Cter in SUMO2); alternate. The segment at 174–201 is disordered; it reads IARRSKTFNPGAGLPTDKKKGGPSPGDV. Serine 178 and serine 197 each carry phosphoserine. A Glycyl lysine isopeptide (Lys-Gly) (interchain with G-Cter in SUMO2) cross-link involves residue lysine 221. The segment at 222–255 is disordered; the sequence is GLLQSGQIPGRERRSGPTDDGEEEMEEDTVTNGS. 2 positions are modified to phosphoserine: serine 236 and serine 255. A compositionally biased stretch (acidic residues) spans 240–255; it reads DDGEEEMEEDTVTNGS.

This sequence belongs to the U2 small nuclear ribonucleoprotein A family. In terms of assembly, identified in the spliceosome B complex. Identified in the spliceosome C complex. Found in a pre-mRNA splicing complex with SFRS4, SFRS5, SNRNP70, SNRPA1, SRRM1 and SRRM2. Found in a pre-mRNA exonic splicing enhancer (ESE) complex with SNRNP70, SNRPA1, SRRM1 and TRA2B. Contributes to the binding of stem loop IV of U2 snRNA with SNRPB2.

It localises to the nucleus. Its function is as follows. Involved in pre-mRNA splicing as component of the spliceosome. Associated with sn-RNP U2, where it contributes to the binding of stem loop IV of U2 snRNA. The polypeptide is U2 small nuclear ribonucleoprotein A' (SNRPA1) (Homo sapiens (Human)).